A 376-amino-acid polypeptide reads, in one-letter code: N-acetyldiaminopimelate deacetylase (376 aa).

Aspartate 69 is an active-site residue. Residue glutamate 128 is the Proton acceptor of the active site.

It belongs to the peptidase M20A family. N-acetyldiaminopimelate deacetylase subfamily.

The enzyme catalyses N-acetyl-(2S,6S)-2,6-diaminopimelate + H2O = (2S,6S)-2,6-diaminopimelate + acetate. The protein operates within amino-acid biosynthesis; L-lysine biosynthesis via DAP pathway; LL-2,6-diaminopimelate from (S)-tetrahydrodipicolinate (acetylase route): step 3/3. Its function is as follows. Catalyzes the conversion of N-acetyl-diaminopimelate to diaminopimelate and acetate. The chain is N-acetyldiaminopimelate deacetylase from Streptococcus pneumoniae (strain Taiwan19F-14).